The sequence spans 210 residues: 3-hydroxy-3-methylglutaryl-coenzyme A reductase 2 (210 aa).

Active-site charge relay system residues include Lys21 and Asp97. The chain crosses the membrane as a helical span at residues 166–186 (LLATIVAGSVLAGELSLMSAI). His195 acts as the Proton donor in catalysis. Asn199 is a glycosylation site (N-linked (GlcNAc...) asparagine).

Belongs to the HMG-CoA reductase family.

Its subcellular location is the endoplasmic reticulum membrane. The protein localises to the mitochondrion membrane. It localises to the plastid membrane. It carries out the reaction (R)-mevalonate + 2 NADP(+) + CoA = (3S)-3-hydroxy-3-methylglutaryl-CoA + 2 NADPH + 2 H(+). Its pathway is metabolic intermediate biosynthesis; (R)-mevalonate biosynthesis; (R)-mevalonate from acetyl-CoA: step 3/3. Functionally, catalyzes the synthesis of mevalonate. The specific precursor of all isoprenoid compounds present in plants. This Hevea brasiliensis (Para rubber tree) protein is 3-hydroxy-3-methylglutaryl-coenzyme A reductase 2 (HMGR2).